The primary structure comprises 437 residues: Protein translocase subunit SecY (437 aa).

The next 10 helical transmembrane spans lie at 19-39, 69-89, 122-142, 157-177, 189-209, 219-239, 275-295, 318-338, 378-398, and 400-420; these read LFTLGIIVVYRLGTHIPIPGV, LLQITVFALGIMPYITASIIL, VALAILQGTGLVATARSGALF, IFTTVVMVICMTAGTCVVMWL, GMSILMFISIAATFPSALWAI, WIEFGTVILVGLVMVGLVVFV, GVIPVIFASSLLYIPALIVQF, HIILYFFLIVFFAFFYVAISF, GSLYLGLIALVPTMALAGFGA, and QNFPFGGTSILIIVGVGLETV.

This sequence belongs to the SecY/SEC61-alpha family. In terms of assembly, component of the Sec protein translocase complex. Heterotrimer consisting of SecY, SecE and SecG subunits. The heterotrimers can form oligomers, although 1 heterotrimer is thought to be able to translocate proteins. Interacts with the ribosome. Interacts with SecDF, and other proteins may be involved. Interacts with SecA.

It is found in the cell membrane. Functionally, the central subunit of the protein translocation channel SecYEG. Consists of two halves formed by TMs 1-5 and 6-10. These two domains form a lateral gate at the front which open onto the bilayer between TMs 2 and 7, and are clamped together by SecE at the back. The channel is closed by both a pore ring composed of hydrophobic SecY resides and a short helix (helix 2A) on the extracellular side of the membrane which forms a plug. The plug probably moves laterally to allow the channel to open. The ring and the pore may move independently. The protein is Protein translocase subunit SecY of Streptomyces lividans.